A 99-amino-acid polypeptide reads, in one-letter code: Duplicate procyclin (99 aa).

This chain is Duplicate procyclin, found in Trypanosoma brucei brucei.